The primary structure comprises 247 residues: ATP synthase subunit a, chloroplastic (247 aa).

Helical transmembrane passes span 38–58, 95–115, 134–154, 199–219, and 220–240; these read QVLITSWVVIAILLGSAAIAV, VPFIGTMFLFIFVSNWSGALL, INTTVALALLTSAAYFYAGLT, LVVVVLVSLVPLVVPIPVMFL, and GLFTSGIQALIFATLAAAYIG.

Belongs to the ATPase A chain family. In terms of assembly, F-type ATPases have 2 components, CF(1) - the catalytic core - and CF(0) - the membrane proton channel. CF(1) has five subunits: alpha(3), beta(3), gamma(1), delta(1), epsilon(1). CF(0) has four main subunits: a, b, b' and c.

It is found in the plastid. Its subcellular location is the chloroplast thylakoid membrane. Its function is as follows. Key component of the proton channel; it plays a direct role in the translocation of protons across the membrane. The sequence is that of ATP synthase subunit a, chloroplastic from Ceratophyllum demersum (Rigid hornwort).